We begin with the raw amino-acid sequence, 225 residues long: MHNRGMSSPSSPLSSSIADLRKSYERAELGEEASHADPLRQFDQWLQEAVAAQVPEPNAMTLATVGADLRPSTRVVLIKGYDERGIVWYTNYGSRKGRQLAGNPFAALQFHWVELERVVRIEGRVEKVSDAESDAYFASRPLDSRIGAWASPQSEVISGRGVLVANAAKYGAQFLLQPLRPPHWGGFRLKPDRWEFWQGRKSRLHDRLCYREETPGAWVRERLAP.

Residues 21–24 (RKSY) and Lys79 each bind substrate. Residues 74–79 (RVVLIK), 89–90 (YT), Arg95, and Lys96 contribute to the FMN site. Substrate is bound by residues Tyr136, Arg140, and Ser144. FMN contacts are provided by residues 153–154 (QS) and Trp197. 203 to 205 (RLH) contributes to the substrate binding site. FMN is bound at residue Arg207.

It belongs to the pyridoxamine 5'-phosphate oxidase family. Homodimer. FMN serves as cofactor.

It carries out the reaction pyridoxamine 5'-phosphate + O2 + H2O = pyridoxal 5'-phosphate + H2O2 + NH4(+). It catalyses the reaction pyridoxine 5'-phosphate + O2 = pyridoxal 5'-phosphate + H2O2. The protein operates within cofactor metabolism; pyridoxal 5'-phosphate salvage; pyridoxal 5'-phosphate from pyridoxamine 5'-phosphate: step 1/1. It participates in cofactor metabolism; pyridoxal 5'-phosphate salvage; pyridoxal 5'-phosphate from pyridoxine 5'-phosphate: step 1/1. In terms of biological role, catalyzes the oxidation of either pyridoxine 5'-phosphate (PNP) or pyridoxamine 5'-phosphate (PMP) into pyridoxal 5'-phosphate (PLP). The chain is Pyridoxine/pyridoxamine 5'-phosphate oxidase from Paracidovorax citrulli (strain AAC00-1) (Acidovorax citrulli).